Here is a 393-residue protein sequence, read N- to C-terminus: Acetylornithine aminotransferase (393 aa).

Residues 102 to 103 (GA) and phenylalanine 136 each bind pyridoxal 5'-phosphate. Arginine 139 lines the N(2)-acetyl-L-ornithine pocket. Residue 219-222 (DEVQ) coordinates pyridoxal 5'-phosphate. At lysine 248 the chain carries N6-(pyridoxal phosphate)lysine. N(2)-acetyl-L-ornithine is bound at residue serine 274. Threonine 275 is a binding site for pyridoxal 5'-phosphate.

The protein belongs to the class-III pyridoxal-phosphate-dependent aminotransferase family. ArgD subfamily. In terms of assembly, homodimer. Pyridoxal 5'-phosphate is required as a cofactor.

Its subcellular location is the cytoplasm. The enzyme catalyses N(2)-acetyl-L-ornithine + 2-oxoglutarate = N-acetyl-L-glutamate 5-semialdehyde + L-glutamate. Its pathway is amino-acid biosynthesis; L-arginine biosynthesis; N(2)-acetyl-L-ornithine from L-glutamate: step 4/4. This Wolinella succinogenes (strain ATCC 29543 / DSM 1740 / CCUG 13145 / JCM 31913 / LMG 7466 / NCTC 11488 / FDC 602W) (Vibrio succinogenes) protein is Acetylornithine aminotransferase.